The sequence spans 44 residues: uncharacterized protein (44 aa).

This is an uncharacterized protein from Bacillus subtilis (strain 168).